We begin with the raw amino-acid sequence, 319 residues long: ATP-dependent 6-phosphofructokinase (319 aa).

Residue Gly-11 participates in ATP binding. Residue 21 to 25 (RAVVR) coordinates ADP. ATP is bound by residues 72 to 73 (RY) and 102 to 105 (GDGS). Position 103 (Asp-103) interacts with Mg(2+). Residue 125–127 (TID) coordinates substrate. Asp-127 (proton acceptor) is an active-site residue. Residue Arg-154 coordinates ADP. Residues Arg-162 and 169-171 (MGR) contribute to the substrate site. ADP is bound by residues 185 to 187 (GAE), Arg-211, and 213 to 215 (KKH). Substrate-binding positions include Glu-222, Arg-243, and 249–252 (HVQR).

This sequence belongs to the phosphofructokinase type A (PFKA) family. ATP-dependent PFK group I subfamily. Prokaryotic clade 'B1' sub-subfamily. As to quaternary structure, homotetramer. Mg(2+) serves as cofactor.

The protein localises to the cytoplasm. The catalysed reaction is beta-D-fructose 6-phosphate + ATP = beta-D-fructose 1,6-bisphosphate + ADP + H(+). It functions in the pathway carbohydrate degradation; glycolysis; D-glyceraldehyde 3-phosphate and glycerone phosphate from D-glucose: step 3/4. With respect to regulation, allosterically activated by ADP and other diphosphonucleosides, and allosterically inhibited by phosphoenolpyruvate. Its function is as follows. Catalyzes the phosphorylation of D-fructose 6-phosphate to fructose 1,6-bisphosphate by ATP, the first committing step of glycolysis. This chain is ATP-dependent 6-phosphofructokinase, found in Listeria innocua serovar 6a (strain ATCC BAA-680 / CLIP 11262).